The primary structure comprises 134 residues: Small ribosomal subunit protein uS8c (134 aa).

This sequence belongs to the universal ribosomal protein uS8 family. Part of the 30S ribosomal subunit.

The protein localises to the plastid. It is found in the chloroplast. Functionally, one of the primary rRNA binding proteins, it binds directly to 16S rRNA central domain where it helps coordinate assembly of the platform of the 30S subunit. The chain is Small ribosomal subunit protein uS8c (rps8) from Vitis vinifera (Grape).